The primary structure comprises 168 residues: Disulfide bond formation protein B 1 (168 aa).

At Met-1–Phe-14 the chain is on the cytoplasmic side. Residues Leu-15 to Tyr-31 traverse the membrane as a helical segment. At Met-32–Tyr-49 the chain is on the periplasmic side. Cys-41 and Cys-44 form a disulfide bridge. The chain crosses the membrane as a helical span at residues Ala-50–Pro-65. Over Gly-66–Phe-72 the chain is Cytoplasmic. The helical transmembrane segment at Phe-73–Gly-89 threads the bilayer. Residues Asn-90 to Gln-144 lie on the Periplasmic side of the membrane. The cysteines at positions 102 and 130 are disulfide-linked. A helical membrane pass occupies residues Trp-145–Arg-163. At Asn-164 to Ala-168 the chain is on the cytoplasmic side.

This sequence belongs to the DsbB family.

The protein localises to the cell inner membrane. Its function is as follows. Required for disulfide bond formation in some periplasmic proteins. Acts by oxidizing the DsbA protein. The chain is Disulfide bond formation protein B 1 (dsbB1) from Pseudomonas putida (strain ATCC 47054 / DSM 6125 / CFBP 8728 / NCIMB 11950 / KT2440).